The primary structure comprises 379 residues: Cytochrome bd-I ubiquinol oxidase subunit 2 (379 aa).

An N-formylmethionine modification is found at methionine 1. Over 1–8 (MIDYEVLR) the chain is Cytoplasmic. The chain crosses the membrane as a helical span at residues 9–28 (FIWWLLVGVLLIGFAVTDGF). The Periplasmic segment spans residues 29–79 (DMGVGMLTRFLGRNDTERRIMINSIAPHWDGNQVWLITAGGALFAAWPMVY). The chain crosses the membrane as a helical span at residues 80–99 (AAAFSGFYVAMILVLASLFF). Residues 100-122 (RPVGFDYRSKIEETRWRNMWDWG) lie on the Cytoplasmic side of the membrane. A helical transmembrane segment spans residues 123–142 (IFIGSFVPPLVIGVAFGNLL). Topologically, residues 143–164 (QGVPFNVDEYLRLYYTGNFFQL) are periplasmic. The helical transmembrane segment at 165-184 (LNPFGLLAGVVSVGMIITQG) threads the bilayer. At 185–205 (ATYLQMRTVGELHLRTRATAQ) the chain is on the cytoplasmic side. The chain crosses the membrane as a helical span at residues 206-225 (VAALVTLVCFALAGVWVMYG). The Periplasmic segment spans residues 226-262 (IDGYVVKSTMDHYAASNPLNKEVVREAGAWLVNFNNT). Residues 263–282 (PILWAIPALGVVLPLLTILT) traverse the membrane as a helical segment. The Cytoplasmic portion of the chain corresponds to 283–292 (ARMDKAAWAF). Residues 293-312 (VFSSLTLACIILTAGIAMFP) form a helical membrane-spanning segment. The Periplasmic segment spans residues 313 to 336 (FVMPSSTMMNASLTMWDATSSQLT). A helical membrane pass occupies residues 337–356 (LNVMTWVAVVLVPIILLYTA). Topologically, residues 357-379 (WCYWKMFGRITKEDIERNTHSLY) are cytoplasmic.

It belongs to the cytochrome ubiquinol oxidase subunit 2 family. Heterodimer of subunits I and II. Heme b is required as a cofactor. The cofactor is heme d cis-diol.

Its subcellular location is the cell inner membrane. It carries out the reaction 2 a ubiquinol + O2(in) + 4 H(+)(in) = 2 a ubiquinone + 2 H2O(in) + 4 H(+)(out). Its pathway is energy metabolism; oxidative phosphorylation. Its function is as follows. A terminal oxidase that produces a proton motive force by the vectorial transfer of protons across the inner membrane. It is the component of the aerobic respiratory chain of E.coli that predominates when cells are grown at low aeration. Generates a proton motive force using protons and electrons from opposite sides of the membrane to generate H(2)O, transferring 1 proton/electron. In Escherichia coli O157:H7, this protein is Cytochrome bd-I ubiquinol oxidase subunit 2 (cydB).